Reading from the N-terminus, the 701-residue chain is DNA ligase A (701 aa).

A disordered region spans residues 1 to 23; sequence MSEKATGEVEAELPEHPDADERR. NAD(+) contacts are provided by residues 49–53, 99–100, and Glu129; these read DAEFD and SL. The N6-AMP-lysine intermediate role is filled by Lys131. NAD(+)-binding residues include Arg152, Glu192, Lys308, and Lys332. Cys426, Cys429, Cys445, and Cys451 together coordinate Zn(2+). Residues 615–701 form the BRCT domain; the sequence is SIERTLEGLS…EQGPPVEPAE (87 aa).

It belongs to the NAD-dependent DNA ligase family. LigA subfamily. The cofactor is Mg(2+). Mn(2+) is required as a cofactor.

It catalyses the reaction NAD(+) + (deoxyribonucleotide)n-3'-hydroxyl + 5'-phospho-(deoxyribonucleotide)m = (deoxyribonucleotide)n+m + AMP + beta-nicotinamide D-nucleotide.. Functionally, DNA ligase that catalyzes the formation of phosphodiester linkages between 5'-phosphoryl and 3'-hydroxyl groups in double-stranded DNA using NAD as a coenzyme and as the energy source for the reaction. It is essential for DNA replication and repair of damaged DNA. Probably the only ligase required for non-homologous end joining (NHEJ) repair of 3-overhangs. The sequence is that of DNA ligase A from Mycolicibacterium smegmatis (strain ATCC 700084 / mc(2)155) (Mycobacterium smegmatis).